A 182-amino-acid chain; its full sequence is Large ribosomal subunit protein uL6 (182 aa).

This sequence belongs to the universal ribosomal protein uL6 family. As to quaternary structure, part of the 50S ribosomal subunit.

Its function is as follows. This protein binds to the 23S rRNA, and is important in its secondary structure. It is located near the subunit interface in the base of the L7/L12 stalk, and near the tRNA binding site of the peptidyltransferase center. The chain is Large ribosomal subunit protein uL6 from Nostoc punctiforme (strain ATCC 29133 / PCC 73102).